The sequence spans 186 residues: Ribosome-recycling factor (186 aa).

It belongs to the RRF family.

It is found in the cytoplasm. Its function is as follows. Responsible for the release of ribosomes from messenger RNA at the termination of protein biosynthesis. May increase the efficiency of translation by recycling ribosomes from one round of translation to another. This Bordetella petrii (strain ATCC BAA-461 / DSM 12804 / CCUG 43448) protein is Ribosome-recycling factor.